The following is a 98-amino-acid chain: MSIVYMNVMLAFMIALIGTLLYRHHLMSSLMCLEGMMLAMYIFISLISLNMHFTTMYMVPLIILVFAACEAALGLALLVKMFNYYGNDYVQNLNLLKC.

Transmembrane regions (helical) follow at residues 1 to 21 (MSIV…GTLL), 29 to 49 (SLMC…LISL), and 59 to 79 (VPLI…ALLV).

The protein belongs to the complex I subunit 4L family. In terms of assembly, core subunit of respiratory chain NADH dehydrogenase (Complex I) which is composed of 45 different subunits.

It localises to the mitochondrion inner membrane. The enzyme catalyses a ubiquinone + NADH + 5 H(+)(in) = a ubiquinol + NAD(+) + 4 H(+)(out). Its function is as follows. Core subunit of the mitochondrial membrane respiratory chain NADH dehydrogenase (Complex I) which catalyzes electron transfer from NADH through the respiratory chain, using ubiquinone as an electron acceptor. Part of the enzyme membrane arm which is embedded in the lipid bilayer and involved in proton translocation. This Hemiechinus auritus (Long-eared hedgehog) protein is NADH-ubiquinone oxidoreductase chain 4L (MT-ND4L).